A 378-amino-acid polypeptide reads, in one-letter code: Envelope glycoprotein M (378 aa).

The Intravirion portion of the chain corresponds to 1-16; it reads MKSSKSDLFIYKTWFK. Residues 17–37 form a helical membrane-spanning segment; sequence LLVLYFVMFVLSATVPIAASF. The Virion surface segment spans residues 38-84; that stretch reads PGLGFPCYYNALVNYSAINLTERNVAKHLTPTLYLEEPEMFAYMTFT. A helical transmembrane segment spans residues 85-105; it reads FLVDCFAAVYYFLGALAIMLA. At 106-118 the chain is on the intravirion side; the sequence is KRHFVVSLTTLSQ. A helical transmembrane segment spans residues 119–139; sequence WIAMVGTPTLILIGMWRMWTI. The Virion surface segment spans residues 140–150; that stretch reads QLFIQTLSYKH. A helical transmembrane segment spans residues 151-171; the sequence is IYLSAFVYLIHFLLSFLHTQC. The Intravirion segment spans residues 172–210; that stretch reads YISRNSQLWSLKVLEQGIPPNTLLDTVVFTIKPLLANCQ. The helical transmembrane segment at 211-231 threads the bilayer; that stretch reads LFCLGLEMLVFSLSFMMAIGN. Over 232 to 239 the chain is Virion surface; it reads SFYVLVSD. Residues 240-260 traverse the membrane as a helical segment; that stretch reads IVFGAINLYLALVLFWVLLTE. Topologically, residues 261–268 are intravirion; that stretch reads LYLVKYMT. Residues 269-289 form a helical membrane-spanning segment; that stretch reads FVMGFYLGGLIGCIFLLVPLW. At 290-303 the chain is on the virion surface side; it reads RYEQIFVAANLRSP. The helical transmembrane segment at 304–324 threads the bilayer; the sequence is ILINILVIFFLCTLSALVRLL. Residues 325 to 378 lie on the Intravirion side of the membrane; it reads RMTWFSPTKPSYEPIQLKNIKHRRVKLQSPSGPSILEEGSSDEGSEDSEEEEEL. The segment at 347–378 is disordered; that stretch reads RRVKLQSPSGPSILEEGSSDEGSEDSEEEEEL. Acidic residues predominate over residues 363–378; sequence GSSDEGSEDSEEEEEL.

It belongs to the herpesviridae glycoprotein M family. Interacts (via N-terminus) with gN (via N-terminus). The gM-gN heterodimer forms the gCII complex.

It is found in the virion membrane. It localises to the host Golgi apparatus. The protein localises to the host trans-Golgi network. The protein resides in the host endosome membrane. Its subcellular location is the host nucleus inner membrane. In terms of biological role, envelope glycoprotein important for virion assembly and egress. Plays a role in the correct incorporation of gH-gL into virion membrane. Directs the glycoprotein N (gN) to the host trans-Golgi network. In Equus caballus (Horse), this protein is Envelope glycoprotein M.